Consider the following 1113-residue polypeptide: StAR-related lipid transfer protein 13 (1113 aa).

At Met-1 the chain carries N-acetylmethionine. In terms of domain architecture, SAM spans 55–122; it reads QQEIEAKEAC…LNKCASMRLD (68 aa). 3 disordered regions span residues 164–218, 230–256, and 308–343; these read PVAD…HSAD, SSLPQSTREGLNQSFHPKNEKPTRTRA, and NGDLQTSPPAACRKGLPCSSKSSGESSPLENSSTVS. Polar residues predominate over residues 179–188; it reads NTASSESVLT. The span at 197–214 shows a compositional bias: low complexity; sequence SIHSESSGGSDSRSQSGH. Residues 230 to 245 show a composition bias toward polar residues; that stretch reads SSLPQSTREGLNQSFH. Residues 322–340 show a composition bias toward low complexity; that stretch reads GLPCSSKSSGESSPLENSS. The residue at position 411 (Ser-411) is a Phosphoserine. Composition is skewed to polar residues over residues 421–435 and 529–549; these read SNGVNWRTGSISLGR and PNQVTLDFEGNSVSEGRTTPS. Disordered regions lie at residues 421-443 and 514-578; these read SNGVNWRTGSISLGRQQGPGMRE and HSTL…GASL. The Rho-GAP domain maps to 663 to 868; that stretch reads VPLIVHVQRT…HMITECNRLF (206 aa). Positions 899-1109 constitute an START domain; it reads LAESGATFHT…SFQPLVAEGP (211 aa).

Homodimer. Interacts with TAX1BP1.

The protein resides in the cytoplasm. It localises to the membrane. The protein localises to the mitochondrion membrane. It is found in the lipid droplet. Its function is as follows. May function as a GTPase-activating protein. In Mus musculus (Mouse), this protein is StAR-related lipid transfer protein 13 (Stard13).